Reading from the N-terminus, the 298-residue chain is Arginase (298 aa).

Residues histidine 98, aspartate 121, histidine 123, and aspartate 125 each contribute to the Mn(2+) site. Residues 123–127 (HGDLN), 134–136 (SGN), and aspartate 177 contribute to the substrate site. 2 residues coordinate Mn(2+): aspartate 225 and aspartate 227. The substrate site is built by threonine 239 and glutamate 270.

It belongs to the arginase family. Mn(2+) serves as cofactor.

The catalysed reaction is L-arginine + H2O = urea + L-ornithine. It functions in the pathway nitrogen metabolism; urea cycle; L-ornithine and urea from L-arginine: step 1/1. The chain is Arginase (rocF) from Brevibacillus brevis (Bacillus brevis).